We begin with the raw amino-acid sequence, 293 residues long: Small ribosomal subunit protein uS5 (293 aa).

The segment at 1 to 56 (MADDAGAAGGPGGPGGPGMGNRGGFRGGFGSGIRGRGRGRGRGRGRGRGARGGKAE) is disordered. N-acetylalanine is present on Ala-2. Residues 7–34 (AAGGPGGPGGPGMGNRGGFRGGFGSGIR) show a composition bias toward gly residues. A compositionally biased stretch (basic residues) spans 35–51 (GRGRGRGRGRGRGRGAR). Residues Lys-54 and Lys-58 each participate in a glycyl lysine isopeptide (Lys-Gly) (interchain with G-Cter in ubiquitin) cross-link. The S5 DRBM domain occupies 102–165 (LKDEVLKIMP…ILAKLSIVPV (64 aa)). Thr-252 is modified (phosphothreonine). The residue at position 263 (Lys-263) is an N6-acetyllysine. Ser-264 carries the phosphoserine modification. Phosphothreonine is present on Thr-270. N6-acetyllysine; alternate is present on Lys-275. Lys-275 participates in a covalent cross-link: Glycyl lysine isopeptide (Lys-Gly) (interchain with G-Cter in SUMO1); alternate. Residue Lys-275 forms a Glycyl lysine isopeptide (Lys-Gly) (interchain with G-Cter in SUMO2); alternate linkage. Lys-275 is covalently cross-linked (Glycyl lysine isopeptide (Lys-Gly) (interchain with G-Cter in ubiquitin); alternate). Position 281 is a phosphoserine (Ser-281).

Belongs to the universal ribosomal protein uS5 family. As to quaternary structure, component of the small ribosomal subunit. Interacts with zinc finger protein ZNF277 (via zinc-finger domains); the interaction is direct; the interaction is extra-ribosomal. Interaction with ZNF277 competes with the binding of RPS2 to protein arginine methyltransferase PRMT3. Post-translationally, citrullinated by PADI4 in the Arg/Gly-rich region. In terms of processing, asymmetric arginine dimethylation by PRMT3 occurs at multiple sites in the Arg/Gly-rich region. Monoubiquitinated at Lys-54 and Lys-58 by RNF10 when a ribosome has stalled during translation, leading to its degradation by the proteasome. Deubiquitinated at Lys-54 and Lys-58 by USP10, preventing degradation by the proteasome and promoting 40S ribosome subunit recycling following ribosome dissociation.

The protein localises to the cytoplasm. Its subcellular location is the nucleus. It is found in the nucleolus. Its function is as follows. Component of the ribosome, a large ribonucleoprotein complex responsible for the synthesis of proteins in the cell. The small ribosomal subunit (SSU) binds messenger RNAs (mRNAs) and translates the encoded message by selecting cognate aminoacyl-transfer RNA (tRNA) molecules. The large subunit (LSU) contains the ribosomal catalytic site termed the peptidyl transferase center (PTC), which catalyzes the formation of peptide bonds, thereby polymerizing the amino acids delivered by tRNAs into a polypeptide chain. The nascent polypeptides leave the ribosome through a tunnel in the LSU and interact with protein factors that function in enzymatic processing, targeting, and the membrane insertion of nascent chains at the exit of the ribosomal tunnel. Plays a role in the assembly and function of the 40S ribosomal subunit. Mutations in this protein affects the control of translational fidelity. Involved in nucleolar processing of pre-18S ribosomal RNA and ribosome assembly. This Homo sapiens (Human) protein is Small ribosomal subunit protein uS5 (RPS2).